We begin with the raw amino-acid sequence, 313 residues long: Olfactory receptor 1f45 (313 aa).

Residues 1–25 (MSSTNQSSVTEFLLLGLSRQPQQQQ) are Extracellular-facing. Residue Asn-5 is glycosylated (N-linked (GlcNAc...) asparagine). A helical transmembrane segment spans residues 26 to 50 (LLFLLFLIMYLATVLGNLLIILAIG). Over 51–57 (TDSRLHT) the chain is Cytoplasmic. A helical membrane pass occupies residues 58-79 (PMYFFLSNLSFVDVCFSSTTVP). Over 80–100 (KVLANHILGSQAISFSGCLTQ) the chain is Extracellular. Cys-97 and Cys-189 are disulfide-bonded. The helical transmembrane segment at 101–120 (LYFLAVFGNMDNFLLAVMSY) threads the bilayer. Residues 121–139 (DRFVAICHPLHYTTKMTRQ) lie on the Cytoplasmic side of the membrane. A helical membrane pass occupies residues 140–158 (LCVLLVVGSWVVANMNCLL). Over 159 to 196 (HILLMARLSFCADNMIPHFFCDGTPLLKLSCSDTHLNE) the chain is Extracellular. Residues 197-219 (LMILTEGAVVMVTPFVCILISYI) form a helical membrane-spanning segment. Residues 220-236 (HITCAVLRVSSPRGGWK) lie on the Cytoplasmic side of the membrane. Residues 237-260 (SFSTCGSHLAVVCLFYGTVIAVYF) traverse the membrane as a helical segment. The Extracellular portion of the chain corresponds to 261–272 (NPSSSHLAGRDM). The chain crosses the membrane as a helical span at residues 273–292 (AAAVMYAVVTPMLNPFIYSL). Topologically, residues 293-313 (RNSDMKAALRKVLAMRFPSKQ) are cytoplasmic.

Belongs to the G-protein coupled receptor 1 family. In terms of tissue distribution, olfactory epithelium.

Its subcellular location is the cell membrane. Odorant receptor. The sequence is that of Olfactory receptor 1f45 (Or1f45) from Rattus norvegicus (Rat).